Here is a 245-residue protein sequence, read N- to C-terminus: Alanyl-tRNA editing protein AlaX-M (245 aa).

Residues histidine 107, histidine 111, cysteine 210, and histidine 214 each contribute to the Zn(2+) site.

It belongs to the class-II aminoacyl-tRNA synthetase family. Editing domain AlaX-M subfamily. The cofactor is Zn(2+).

Its subcellular location is the cytoplasm. In terms of biological role, functions in trans to edit the amino acid moiety from mischarged charged tRNA(Ala). The sequence is that of Alanyl-tRNA editing protein AlaX-M (alaXM) from Methanosarcina acetivorans (strain ATCC 35395 / DSM 2834 / JCM 12185 / C2A).